A 182-amino-acid chain; its full sequence is Ribosome maturation factor RimM (182 aa).

A PRC barrel domain is found at 101–174 (QDEYFIHQLY…QIVVRLLPGL (74 aa)).

The protein belongs to the RimM family. Binds ribosomal protein uS19.

It localises to the cytoplasm. An accessory protein needed during the final step in the assembly of 30S ribosomal subunit, possibly for assembly of the head region. Essential for efficient processing of 16S rRNA. May be needed both before and after RbfA during the maturation of 16S rRNA. It has affinity for free ribosomal 30S subunits but not for 70S ribosomes. This chain is Ribosome maturation factor RimM, found in Roseiflexus sp. (strain RS-1).